The following is a 283-amino-acid chain: GTPase Era (283 aa).

Positions 7-175 (YCGHVIIVGK…KNIIKSYLPE (169 aa)) constitute an Era-type G domain. The interval 15 to 22 (GKANVGKS) is G1. 15-22 (GKANVGKS) lines the GTP pocket. A G2 region spans residues 41–45 (NTTQS). The interval 62-65 (DTPG) is G3. Residues 62-66 (DTPGV) and 124-127 (NKID) each bind GTP. A G4 region spans residues 124-127 (NKID). Residues 154–156 (ISA) are G5. Positions 198-283 (IREQLILFLG…HLVLWVKDKN (86 aa)) constitute a KH type-2 domain.

This sequence belongs to the TRAFAC class TrmE-Era-EngA-EngB-Septin-like GTPase superfamily. Era GTPase family. Monomer.

The protein localises to the cytoplasm. The protein resides in the cell membrane. An essential GTPase that binds both GDP and GTP, with rapid nucleotide exchange. Plays a role in 16S rRNA processing and 30S ribosomal subunit biogenesis and possibly also in cell cycle regulation and energy metabolism. In Buchnera aphidicola subsp. Acyrthosiphon pisum (strain Tuc7), this protein is GTPase Era.